The following is a 188-amino-acid chain: UPF0461 protein C5orf24 homolog (188 aa).

Ser37 bears the Phosphoserine mark. Lys75 is covalently cross-linked (Glycyl lysine isopeptide (Lys-Gly) (interchain with G-Cter in SUMO2)). Positions 79–142 are disordered; it reads KKKKNLNRSG…GYKVSPGRPP (64 aa). Residues 80-92 show a composition bias toward basic residues; that stretch reads KKKNLNRSGKRGR. The span at 94–107 shows a compositional bias: polar residues; sequence SGTTKSAGYRTSTG. Phosphoserine occurs at positions 121 and 180. Lys184 participates in a covalent cross-link: Glycyl lysine isopeptide (Lys-Gly) (interchain with G-Cter in SUMO2).

This sequence belongs to the UPF0461 family.

The sequence is that of UPF0461 protein C5orf24 homolog from Bos taurus (Bovine).